The following is a 271-amino-acid chain: Elongation factor Ts (271 aa).

The segment at 76 to 79 is involved in Mg(2+) ion dislocation from EF-Tu; sequence TDFV.

This sequence belongs to the EF-Ts family.

It is found in the cytoplasm. Functionally, associates with the EF-Tu.GDP complex and induces the exchange of GDP to GTP. It remains bound to the aminoacyl-tRNA.EF-Tu.GTP complex up to the GTP hydrolysis stage on the ribosome. The polypeptide is Elongation factor Ts (Mycobacterium tuberculosis (strain ATCC 25177 / H37Ra)).